A 150-amino-acid polypeptide reads, in one-letter code: Transcription antitermination protein NusB (150 aa).

Belongs to the NusB family.

In terms of biological role, involved in transcription antitermination. Required for transcription of ribosomal RNA (rRNA) genes. Binds specifically to the boxA antiterminator sequence of the ribosomal RNA (rrn) operons. This is Transcription antitermination protein NusB from Streptococcus pyogenes serotype M2 (strain MGAS10270).